A 243-amino-acid chain; its full sequence is Ribonuclease 3 (243 aa).

The 137-residue stretch at 10 to 146 (VNRFRKRFDT…FIGALYLDQG (137 aa)) folds into the RNase III domain. Residue Glu59 coordinates Mg(2+). Asp63 is a catalytic residue. Mg(2+)-binding residues include Asp132 and Glu135. Glu135 is an active-site residue. The region spanning 172 to 241 (DFKTQFQEYV…AESAYKQLKQ (70 aa)) is the DRBM domain. Positions 219–231 (GKGKTKKESEQRA) are enriched in basic and acidic residues. Positions 219-243 (GKGKTKKESEQRAAESAYKQLKQIK) are disordered.

This sequence belongs to the ribonuclease III family. Homodimer. Mg(2+) is required as a cofactor.

Its subcellular location is the cytoplasm. It catalyses the reaction Endonucleolytic cleavage to 5'-phosphomonoester.. In terms of biological role, digests double-stranded RNA. Involved in the processing of primary rRNA transcript to yield the immediate precursors to the large and small rRNAs (23S and 16S). Processes some mRNAs, and tRNAs when they are encoded in the rRNA operon. Processes pre-crRNA and tracrRNA of type II CRISPR loci if present in the organism. The polypeptide is Ribonuclease 3 (Staphylococcus aureus (strain USA300)).